The chain runs to 339 residues: Transaldolase (339 aa).

The active-site Schiff-base intermediate with substrate is lysine 135.

This sequence belongs to the transaldolase family. Type 1 subfamily. In terms of assembly, homodimer.

It is found in the cytoplasm. The catalysed reaction is D-sedoheptulose 7-phosphate + D-glyceraldehyde 3-phosphate = D-erythrose 4-phosphate + beta-D-fructose 6-phosphate. Its pathway is carbohydrate degradation; pentose phosphate pathway; D-glyceraldehyde 3-phosphate and beta-D-fructose 6-phosphate from D-ribose 5-phosphate and D-xylulose 5-phosphate (non-oxidative stage): step 2/3. Transaldolase is important for the balance of metabolites in the pentose-phosphate pathway. The protein is Transaldolase of Prochlorococcus marinus (strain MIT 9211).